The chain runs to 78 residues: Large ribosomal subunit protein bL28 (78 aa).

It belongs to the bacterial ribosomal protein bL28 family.

In Thermosynechococcus vestitus (strain NIES-2133 / IAM M-273 / BP-1), this protein is Large ribosomal subunit protein bL28.